A 183-amino-acid polypeptide reads, in one-letter code: Chromophore lyase CpcT/CpeT 4 (183 aa).

It belongs to the CpcT/CpeT biliprotein lyase family.

Covalently attaches a chromophore to Cys residue(s) of phycobiliproteins. This chain is Chromophore lyase CpcT/CpeT 4, found in Gloeobacter violaceus (strain ATCC 29082 / PCC 7421).